The sequence spans 263 residues: 3-methyl-2-oxobutanoate hydroxymethyltransferase (263 aa).

Mg(2+) contacts are provided by Asp43 and Asp82. 3-methyl-2-oxobutanoate-binding positions include 43 to 44 (DS), Asp82, and Lys111. Glu113 lines the Mg(2+) pocket. The active-site Proton acceptor is the Glu179.

This sequence belongs to the PanB family. In terms of assembly, homodecamer; pentamer of dimers. The cofactor is Mg(2+).

Its subcellular location is the cytoplasm. It catalyses the reaction 3-methyl-2-oxobutanoate + (6R)-5,10-methylene-5,6,7,8-tetrahydrofolate + H2O = 2-dehydropantoate + (6S)-5,6,7,8-tetrahydrofolate. Its pathway is cofactor biosynthesis; (R)-pantothenate biosynthesis; (R)-pantoate from 3-methyl-2-oxobutanoate: step 1/2. Functionally, catalyzes the reversible reaction in which hydroxymethyl group from 5,10-methylenetetrahydrofolate is transferred onto alpha-ketoisovalerate to form ketopantoate. The chain is 3-methyl-2-oxobutanoate hydroxymethyltransferase from Neisseria meningitidis serogroup A / serotype 4A (strain DSM 15465 / Z2491).